A 508-amino-acid polypeptide reads, in one-letter code: UTP--glucose-1-phosphate uridylyltransferase (508 aa).

Ser13 carries the post-translational modification Phosphoserine. UTP is bound by residues 113-116 (LNGG), Lys127, Gln190, and Gly222. 115–116 (GG) contacts substrate. Residue Lys127 coordinates Mg(2+). Residues His223 and 251–253 (NID) each bind substrate. 2 residues coordinate UTP: Asp253 and Lys396. Residue Asp253 coordinates Mg(2+). Lys396 is an active-site residue. Residue Thr426 is modified to Phosphothreonine. Ser434 is modified (phosphoserine). Lys438 carries the post-translational modification N6-acetyllysine. 2 positions are modified to phosphoserine: Ser448 and Ser461. The tract at residues 457-508 (HLTVSGDVTFGKNVSLKGTVIIIANHGDRIDIPPGAVLENKIVSGNLRILDH) is oligomerization. The interval 502-503 (NL) is critical for end-to-end subunit interaction.

The protein belongs to the UDPGP type 1 family. As to quaternary structure, homooctamer.

It is found in the cytoplasm. The enzyme catalyses alpha-D-glucose 1-phosphate + UTP + H(+) = UDP-alpha-D-glucose + diphosphate. The protein operates within glycan biosynthesis; glycogen biosynthesis. UTP--glucose-1-phosphate uridylyltransferase catalyzing the conversion of glucose-1-phosphate into UDP-glucose, a crucial precursor for the production of glycogen. The chain is UTP--glucose-1-phosphate uridylyltransferase (Ugp2) from Mus musculus (Mouse).